The chain runs to 953 residues: Translation initiation factor IF-2 (953 aa).

The interval 53 to 368 (AKKAVAGTSE…PVTERKFHEL (316 aa)) is disordered. Basic and acidic residues-rich tracts occupy residues 135-151 (FKAE…ERRK) and 162-190 (RNDR…RNRQ). Low complexity predominate over residues 191 to 214 (EQGNQHRNQGQSQYNQQRQSFNQG). Over residues 236-266 (RSSEERFKQAKANKEALREQNKRKEQAKLED) the composition is skewed to basic and acidic residues. Over residues 274–288 (PKPTAKAPATPAPTA) the composition is skewed to low complexity. Positions 301–318 (ARPDKERDNFDHEEDGPR) are enriched in basic and acidic residues. The segment covering 332–341 (NQKNSNWNNN) has biased composition (low complexity). Positions 455 to 622 (ERPPVVTIMG…TVLLVAEIQE (168 aa)) constitute a tr-type G domain. Positions 464-471 (GHVDHGKT) are G1. 464-471 (GHVDHGKT) lines the GTP pocket. The interval 489-493 (GITQH) is G2. Residues 510 to 513 (DTPG) are G3. Residues 510–514 (DTPGH) and 564–567 (NKID) contribute to the GTP site. Residues 564–567 (NKID) are G4. Residues 600-602 (SAK) form a G5 region.

The protein belongs to the TRAFAC class translation factor GTPase superfamily. Classic translation factor GTPase family. IF-2 subfamily.

Its subcellular location is the cytoplasm. In terms of biological role, one of the essential components for the initiation of protein synthesis. Protects formylmethionyl-tRNA from spontaneous hydrolysis and promotes its binding to the 30S ribosomal subunits. Also involved in the hydrolysis of GTP during the formation of the 70S ribosomal complex. In Streptococcus gordonii (strain Challis / ATCC 35105 / BCRC 15272 / CH1 / DL1 / V288), this protein is Translation initiation factor IF-2.